A 389-amino-acid chain; its full sequence is uncharacterized protein (389 aa).

4 disordered regions span residues 119–156 (SSLF…GENQ), 180–233 (PTSK…SSMG), 294–321 (SIPS…TSRT), and 362–389 (PEDM…EIKV). The segment covering 137–155 (SPSTINIEKNRHSSNSGEN) has biased composition (polar residues). Over residues 190–204 (DDGDEEDDTDDEGEA) the composition is skewed to acidic residues.

This is an uncharacterized protein from Caenorhabditis elegans.